We begin with the raw amino-acid sequence, 331 residues long: Beta-hexosaminidase (331 aa).

Substrate is bound by residues aspartate 60, arginine 68, arginine 133, and 163–164; that span reads KH. Catalysis depends on histidine 176, which acts as the Proton donor/acceptor. Catalysis depends on aspartate 247, which acts as the Nucleophile.

It belongs to the glycosyl hydrolase 3 family. NagZ subfamily.

Its subcellular location is the cytoplasm. It catalyses the reaction Hydrolysis of terminal non-reducing N-acetyl-D-hexosamine residues in N-acetyl-beta-D-hexosaminides.. The protein operates within cell wall biogenesis; peptidoglycan recycling. In terms of biological role, plays a role in peptidoglycan recycling by cleaving the terminal beta-1,4-linked N-acetylglucosamine (GlcNAc) from peptide-linked peptidoglycan fragments, giving rise to free GlcNAc, anhydro-N-acetylmuramic acid and anhydro-N-acetylmuramic acid-linked peptides. The sequence is that of Beta-hexosaminidase from Xanthomonas campestris pv. campestris (strain B100).